The following is a 301-amino-acid chain: Probable 5-dehydro-4-deoxyglucarate dehydratase (301 aa).

It belongs to the DapA family.

The catalysed reaction is 5-dehydro-4-deoxy-D-glucarate + H(+) = 2,5-dioxopentanoate + CO2 + H2O. Its pathway is carbohydrate acid metabolism; D-glucarate degradation; 2,5-dioxopentanoate from D-glucarate: step 2/2. This chain is Probable 5-dehydro-4-deoxyglucarate dehydratase, found in Cereibacter sphaeroides (strain KD131 / KCTC 12085) (Rhodobacter sphaeroides).